The primary structure comprises 258 residues: Acyl-[acyl-carrier-protein]--UDP-N-acetylglucosamine O-acyltransferase (258 aa).

This sequence belongs to the transferase hexapeptide repeat family. LpxA subfamily. In terms of assembly, homotrimer.

The protein localises to the cytoplasm. It carries out the reaction a (3R)-hydroxyacyl-[ACP] + UDP-N-acetyl-alpha-D-glucosamine = a UDP-3-O-[(3R)-3-hydroxyacyl]-N-acetyl-alpha-D-glucosamine + holo-[ACP]. It functions in the pathway glycolipid biosynthesis; lipid IV(A) biosynthesis; lipid IV(A) from (3R)-3-hydroxytetradecanoyl-[acyl-carrier-protein] and UDP-N-acetyl-alpha-D-glucosamine: step 1/6. Its function is as follows. Involved in the biosynthesis of lipid A, a phosphorylated glycolipid that anchors the lipopolysaccharide to the outer membrane of the cell. The protein is Acyl-[acyl-carrier-protein]--UDP-N-acetylglucosamine O-acyltransferase of Pseudomonas putida (strain ATCC 47054 / DSM 6125 / CFBP 8728 / NCIMB 11950 / KT2440).